The sequence spans 242 residues: Carboxy-S-adenosyl-L-methionine synthase (242 aa).

S-adenosyl-L-methionine-binding positions include Tyr39, 64 to 66, 89 to 90, 117 to 118, Asn132, and Arg199; these read GCS, DN, and DI.

Belongs to the class I-like SAM-binding methyltransferase superfamily. Cx-SAM synthase family. As to quaternary structure, homodimer.

It catalyses the reaction prephenate + S-adenosyl-L-methionine = carboxy-S-adenosyl-L-methionine + 3-phenylpyruvate + H2O. In terms of biological role, catalyzes the conversion of S-adenosyl-L-methionine (SAM) to carboxy-S-adenosyl-L-methionine (Cx-SAM). The chain is Carboxy-S-adenosyl-L-methionine synthase from Aliivibrio fischeri (strain MJ11) (Vibrio fischeri).